Reading from the N-terminus, the 137-residue chain is DNA-directed RNA polymerase I subunit RPA14 (137 aa).

The segment at 100 to 137 is disordered; it reads PPAQDFSAAPIQVSTTEKKETSIGVSATGGKKTTFADE. Ser-121 carries the post-translational modification Phosphoserine.

In terms of assembly, component of the RNA polymerase I (Pol I) complex consisting of 14 subunits: RPA135, RPA190, RPC40, RPA14, RPB5, RPO26, RPA43, RPB8, RPA12, RPB10, RPC19, RPC10, RPA49 and RPA34. The complex is composed of a horseshoe-shaped core containing ten subunits (RPA135, RPA190, RPB5, RPO26, RPB8, RPB10, RPC10, RPA12, RPC19 and RPC40) where RPA135 and RPA190 form the DNA-binding cleft. Outside of the core, RPA14 and RPA43 form the stalk that mediates interactions with transcription initiation factors and newly synthesized RNA. The N-terminus is blocked.

It is found in the nucleus. Its subcellular location is the nucleolus. Its function is as follows. DNA-dependent RNA polymerases catalyze the transcription of DNA into RNA using the four ribonucleoside triphosphates as substrates. Component of RNA polymerase I (Pol I) which synthesizes ribosomal RNA precursors. RPA14 seems to play a role in the stability of subunits RPO26 and RPA43. In vitro, the RPA14-RPA43 subcomplex binds single-stranded RNA. This chain is DNA-directed RNA polymerase I subunit RPA14 (RPA14), found in Saccharomyces cerevisiae (strain ATCC 204508 / S288c) (Baker's yeast).